The following is a 78-amino-acid chain: Small ribosomal subunit protein bS18B (78 aa).

Residues methionine 1–glycine 22 are disordered.

The protein belongs to the bacterial ribosomal protein bS18 family. As to quaternary structure, part of the 30S ribosomal subunit. Forms a tight heterodimer with protein bS6.

Functionally, binds as a heterodimer with protein bS6 to the central domain of the 16S rRNA, where it helps stabilize the platform of the 30S subunit. The sequence is that of Small ribosomal subunit protein bS18B from Streptomyces avermitilis (strain ATCC 31267 / DSM 46492 / JCM 5070 / NBRC 14893 / NCIMB 12804 / NRRL 8165 / MA-4680).